The following is a 1123-amino-acid chain: Translation initiation factor IF-2 (1123 aa).

Disordered regions lie at residues 52 to 452 and 480 to 512; these read LLKA…KVHI and LARPSKPKSQQKAAPKPVAAMRKRRKETTRQRQ. Composition is skewed to low complexity over residues 54 to 73, 94 to 113, and 121 to 133; these read KAGSAPRAAASPSKPAPGKA, KPAASSPPAAPAAPTKAKSP, and AAPSRPAAPKASA. Positions 170-187 are enriched in pro residues; that stretch reads PPSPPARPVPQQPSPPSA. Over residues 193–206 the composition is skewed to low complexity; the sequence is APIRRAAPNDAPRP. Composition is skewed to pro residues over residues 207-217 and 258-268; these read ANAPPSRPQPK and SPRPAVSPRPS. Low complexity predominate over residues 285-304; it reads RPGAPTRPGTGAGRPSRPGG. Residues 320–339 show a composition bias toward gly residues; it reads GNRGEGGRPPGGARPAGGGN. The span at 388–403 shows a compositional bias: pro residues; the sequence is ATPPVSRPTATPPSPA. Residues 412-422 are compositionally biased toward gly residues; that stretch reads FRPGAGPGGQR. Basic and acidic residues predominate over residues 425 to 439; sequence GRPDWDDSAKLDALR. Low complexity predominate over residues 486 to 499; sequence PKSQQKAAPKPVAA. Residues 500 to 512 show a composition bias toward basic residues; sequence MRKRRKETTRQRQ. The region spanning 615–787 is the tr-type G domain; sequence RRPPVVTVMG…LLLVTEVEDL (173 aa). The tract at residues 624-631 is G1; sequence GHVDHGKT. Residue 624 to 631 participates in GTP binding; that stretch reads GHVDHGKT. The segment at 649–653 is G2; it reads GITQH. The tract at residues 674–677 is G3; the sequence is DTPG. GTP is bound by residues 674–678 and 728–731; these read DTPGH and NKID. The G4 stretch occupies residues 728 to 731; sequence NKID. The tract at residues 764 to 766 is G5; sequence SAI.

The protein belongs to the TRAFAC class translation factor GTPase superfamily. Classic translation factor GTPase family. IF-2 subfamily.

The protein localises to the cytoplasm. Its function is as follows. One of the essential components for the initiation of protein synthesis. Protects formylmethionyl-tRNA from spontaneous hydrolysis and promotes its binding to the 30S ribosomal subunits. Also involved in the hydrolysis of GTP during the formation of the 70S ribosomal complex. This is Translation initiation factor IF-2 from Synechococcus sp. (strain WH7803).